The primary structure comprises 87 residues: Mitochondrial import inner membrane translocase subunit TIM8 (87 aa).

A Twin CX3C motif motif is present at residues 44 to 68; that stretch reads CFKKCVESVNDSNLSSQEEQCLSNC. Intrachain disulfides connect cysteine 44/cysteine 68 and cysteine 48/cysteine 64.

The protein belongs to the small Tim family. Heterohexamer; composed of 3 copies of TIM8 and 3 copies of TIM13, named soluble 70 kDa complex. Associates with the TIM22 complex, whose core is composed of TIM18, TIM22 and TIM54. Interacts with the transmembrane regions of multi-pass transmembrane proteins in transit.

It is found in the mitochondrion inner membrane. The protein resides in the mitochondrion intermembrane space. Mitochondrial intermembrane chaperone that participates in the import and insertion of some multi-pass transmembrane proteins into the mitochondrial inner membrane. Also required for the transfer of beta-barrel precursors from the TOM complex to the sorting and assembly machinery (SAM complex) of the outer membrane. Acts as a chaperone-like protein that protects the hydrophobic precursors from aggregation and guide them through the mitochondrial intermembrane space. The TIM8-TIM13 complex is non essential and only mediates the import of few proteins under precise conditions, while the predominant TIM9-TIM10 70 kDa complex is crucial and mediates the import of much more proteins. Strictly required for import of TIM23 in some conditions, when a low membrane potential exists in the mitochondria. In Saccharomyces cerevisiae (strain ATCC 204508 / S288c) (Baker's yeast), this protein is Mitochondrial import inner membrane translocase subunit TIM8 (TIM8).